The following is a 271-amino-acid chain: MNFFQAIILAIAQGVSELFPISSVAHSVIIPYLFGWKLSPFFLKTNFLEFVVMMHIGTTISLIVYFRKDWKKMLKSLFNKKTSKRNLALIVIGTIPAIILGAIFEQTITNAFSDVIVASIFLIFNGLLLFFGEQTKKRGNKSIEDLKGWQALVIGCFQSLALIPGFSRSGSSITAGFWMGLSNEESARFSMLLSTPMVAGAATLEIPKLIKNHVPGLLSLSLIGGIVAGLAAFLSIYILMHWFNHKKNNTMLPFAIYCIVIGIGVLASKAI.

8 helical membrane-spanning segments follow: residues 1–21, 46–66, 88–108, 111–131, 146–166, 190–210, 220–240, and 251–271; these read MNFF…LFPI, NFLE…IVYF, ALIV…EQTI, AFSD…LLFF, LKGW…IPGF, SMLL…PKLI, LSLI…YILM, and MLPF…SKAI.

This sequence belongs to the UppP family.

The protein resides in the cell membrane. The enzyme catalyses di-trans,octa-cis-undecaprenyl diphosphate + H2O = di-trans,octa-cis-undecaprenyl phosphate + phosphate + H(+). Catalyzes the dephosphorylation of undecaprenyl diphosphate (UPP). Confers resistance to bacitracin. The protein is Undecaprenyl-diphosphatase 2 of Oenococcus oeni (strain ATCC BAA-331 / PSU-1).